Consider the following 274-residue polypeptide: NH(3)-dependent NAD(+) synthetase (274 aa).

Residue 46–53 coordinates ATP; sequence GISGGQDS. Aspartate 52 is a binding site for Mg(2+). Arginine 140 is a deamido-NAD(+) binding site. Threonine 160 contacts ATP. Residue glutamate 165 coordinates Mg(2+). Residues lysine 173 and aspartate 180 each coordinate deamido-NAD(+). ATP contacts are provided by lysine 189 and threonine 211. 260–261 contacts deamido-NAD(+); it reads HK.

The protein belongs to the NAD synthetase family. In terms of assembly, homodimer.

It carries out the reaction deamido-NAD(+) + NH4(+) + ATP = AMP + diphosphate + NAD(+) + H(+). Its pathway is cofactor biosynthesis; NAD(+) biosynthesis; NAD(+) from deamido-NAD(+) (ammonia route): step 1/1. Catalyzes the ATP-dependent amidation of deamido-NAD to form NAD. Uses ammonia as a nitrogen source. This is NH(3)-dependent NAD(+) synthetase from Lysinibacillus sphaericus (strain C3-41).